A 428-amino-acid polypeptide reads, in one-letter code: Glutamate-1-semialdehyde 2,1-aminomutase (428 aa).

Lys-265 is subject to N6-(pyridoxal phosphate)lysine.

This sequence belongs to the class-III pyridoxal-phosphate-dependent aminotransferase family. HemL subfamily. In terms of assembly, homodimer. The cofactor is pyridoxal 5'-phosphate.

The protein resides in the cytoplasm. The enzyme catalyses (S)-4-amino-5-oxopentanoate = 5-aminolevulinate. Its pathway is porphyrin-containing compound metabolism; protoporphyrin-IX biosynthesis; 5-aminolevulinate from L-glutamyl-tRNA(Glu): step 2/2. In Shewanella woodyi (strain ATCC 51908 / MS32), this protein is Glutamate-1-semialdehyde 2,1-aminomutase.